The primary structure comprises 86 residues: Large ribosomal subunit protein bL31B (86 aa).

It belongs to the bacterial ribosomal protein bL31 family. Type B subfamily. As to quaternary structure, part of the 50S ribosomal subunit.

This is Large ribosomal subunit protein bL31B from Vibrio vulnificus (strain YJ016).